The sequence spans 460 residues: 3-isopropylmalate dehydratase large subunit (460 aa).

Residues C338, C398, and C401 each coordinate [4Fe-4S] cluster.

It belongs to the aconitase/IPM isomerase family. LeuC type 1 subfamily. In terms of assembly, heterodimer of LeuC and LeuD. Requires [4Fe-4S] cluster as cofactor.

It carries out the reaction (2R,3S)-3-isopropylmalate = (2S)-2-isopropylmalate. The protein operates within amino-acid biosynthesis; L-leucine biosynthesis; L-leucine from 3-methyl-2-oxobutanoate: step 2/4. Catalyzes the isomerization between 2-isopropylmalate and 3-isopropylmalate, via the formation of 2-isopropylmaleate. The polypeptide is 3-isopropylmalate dehydratase large subunit (Streptococcus thermophilus (strain ATCC BAA-250 / LMG 18311)).